Reading from the N-terminus, the 426-residue chain is Serine--tRNA ligase (426 aa).

233–235 (TAE) serves as a coordination point for L-serine. 264 to 266 (RSE) lines the ATP pocket. Glutamate 287 contacts L-serine. 351–354 (EISS) lines the ATP pocket. Serine 387 is a binding site for L-serine.

It belongs to the class-II aminoacyl-tRNA synthetase family. Type-1 seryl-tRNA synthetase subfamily. Homodimer. The tRNA molecule binds across the dimer.

It localises to the cytoplasm. The enzyme catalyses tRNA(Ser) + L-serine + ATP = L-seryl-tRNA(Ser) + AMP + diphosphate + H(+). It catalyses the reaction tRNA(Sec) + L-serine + ATP = L-seryl-tRNA(Sec) + AMP + diphosphate + H(+). It functions in the pathway aminoacyl-tRNA biosynthesis; selenocysteinyl-tRNA(Sec) biosynthesis; L-seryl-tRNA(Sec) from L-serine and tRNA(Sec): step 1/1. Its function is as follows. Catalyzes the attachment of serine to tRNA(Ser). Is also able to aminoacylate tRNA(Sec) with serine, to form the misacylated tRNA L-seryl-tRNA(Sec), which will be further converted into selenocysteinyl-tRNA(Sec). The sequence is that of Serine--tRNA ligase from Clostridium botulinum (strain Hall / ATCC 3502 / NCTC 13319 / Type A).